The chain runs to 468 residues: MKKTKDIGICAIDIYFPQTYVNQSELKKYDKVSNGKYTIGLGQTNMSFVGDREDIVSMAMTSVKMMMSKYSIDYQSIGRLEVGTETIIDKSKSVKSSIMSLFQEYGNTSLEGVDTLNACYGGTNALFNSLQWIESSYWDGRYALVVTGDIAVYSKGAARPTGGAGVVTMLIGPNATLIFDQSLRGTHMENVNDFYKPDLSSEYPYVDGKLSIECYLRALDKCYLEYKKKFESINDDNKFSMDSFDYVCFHSPYNRLVQKSYARLIYNDFLQNPNNPKYQDLLPFKDLSTGKDSYINSKLDQITLKLSLDDFKTKVNPSTLLSKECGNSYCGSVYSGILSLLSNVNDLNNKKVLVFSYGSGLAASLFSFRINNNKNRNNNNNNNNCFFKTTNDIGKISNIKERLSNRVKVSPEEFTRILDIREKSHQMVGARTPIDTLDYISAGTFYLEKIDEKLIRHYKSKPIISSKL.

Glu-85 functions as the Proton donor/acceptor in the catalytic mechanism. Cys-119 (acyl-thioester intermediate) is an active-site residue. (3S)-3-hydroxy-3-methylglutaryl-CoA-binding residues include Cys-119, Thr-161, Ser-211, His-250, Lys-259, Asn-327, and Ser-359. His-250 functions as the Proton donor/acceptor in the catalytic mechanism.

Belongs to the thiolase-like superfamily. HMG-CoA synthase family.

The catalysed reaction is acetoacetyl-CoA + acetyl-CoA + H2O = (3S)-3-hydroxy-3-methylglutaryl-CoA + CoA + H(+). It participates in metabolic intermediate biosynthesis; (R)-mevalonate biosynthesis; (R)-mevalonate from acetyl-CoA: step 2/3. Functionally, condenses acetyl-CoA with acetoacetyl-CoA to form HMG-CoA, which is the substrate for HMG-CoA reductase. The polypeptide is Hydroxymethylglutaryl-CoA synthase B (hgsB) (Dictyostelium discoideum (Social amoeba)).